The chain runs to 634 residues: GTP-binding protein 4 (634 aa).

Position 2 is an N-acetylalanine (Ala2). Lys103 carries the N6-acetyllysine; alternate modification. Residue Lys103 forms a Glycyl lysine isopeptide (Lys-Gly) (interchain with G-Cter in SUMO2); alternate linkage. Ser122 bears the Phosphoserine mark. In terms of domain architecture, OBG-type G spans 169-340 (RTLLLCGYPN…VKTEACDRLL (172 aa)). Residues 175-182 (GYPNVGKS), 221-225 (DTPGI), and 289-292 (NKCD) contribute to the GTP site. Residue Lys332 forms a Glycyl lysine isopeptide (Lys-Gly) (interchain with G-Cter in SUMO2) linkage. Phosphoserine is present on residues Ser468, Ser470, and Ser472. Residues 495-517 (ILESKEKNTQGPRMPRTAKKVQR) are disordered. An N6-acetyllysine modification is found at Lys522. The segment at 529 to 634 (VDMDDKDDAH…KRKAGKKDRR (106 aa)) is disordered. Lys534 is covalently cross-linked (Glycyl lysine isopeptide (Lys-Gly) (interchain with G-Cter in SUMO2)). Basic residues predominate over residues 544–554 (RRSRSITRKRK). Phosphoserine is present on Ser558. Residues 560-572 (PPSSVARSGSCSR) show a composition bias toward polar residues. Residues 573-585 (TPRDVSGLRDVKM) are compositionally biased toward basic and acidic residues. The segment covering 586–604 (VKKAKTMMKNAQKKMNRLG) has biased composition (basic residues). Residues 605–618 (KKGEADRHVFDMKP) are compositionally biased toward basic and acidic residues. The span at 619-634 (KHLLSGKRKAGKKDRR) shows a compositional bias: basic residues.

The protein belongs to the TRAFAC class OBG-HflX-like GTPase superfamily. OBG GTPase family. NOG subfamily. Associates with pre-60S ribosomal particles. Interacts with MINAS-60 (product of an alternative open reading frame of RBM10).

The protein resides in the nucleus. It is found in the nucleolus. Its function is as follows. Involved in the biogenesis of the 60S ribosomal subunit. Acts as a TP53 repressor, preventing TP53 stabilization and cell cycle arrest. In Homo sapiens (Human), this protein is GTP-binding protein 4.